The primary structure comprises 207 residues: MKVSTKDKIIESAVMLFNQKGFSGTSVREIAKSADVNVAHISYYFKGKGGLMEHLVSEFYEGYSKTLETAASNISTQSTQEQLLQLVFDILSYQHNHRQLTRFVYREVTIDSTLIREIMSTYLMKEKYIFQLIIEEGEKQREYLTLPLPHFILQLKSLLMMPYLQPQYISEVLYMQPHEPYFYKMYFEEIKIWIRSVFRTGDVALTN.

One can recognise an HTH tetR-type domain in the interval 3–63 (VSTKDKIIES…HLVSEFYEGY (61 aa)). The H-T-H motif DNA-binding region spans 26-45 (SVREIAKSADVNVAHISYYF).

The protein is Probable HTH-type transcriptional regulator YttP (yttP) of Bacillus subtilis (strain 168).